We begin with the raw amino-acid sequence, 92 residues long: Putative regulatory protein Tpet_0986 (92 aa).

This sequence belongs to the RemA family.

The protein is Putative regulatory protein Tpet_0986 of Thermotoga petrophila (strain ATCC BAA-488 / DSM 13995 / JCM 10881 / RKU-1).